A 485-amino-acid chain; its full sequence is Rop guanine nucleotide exchange factor 2 (485 aa).

The disordered stretch occupies residues Met1–Ser36. The PRONE domain maps to Leu107–Glu485.

As to quaternary structure, interacts with ARC10/ROP11. In terms of tissue distribution, expressed in the vascular tissues of roots, leaves, sepals, petals and siliques.

Guanine-nucleotide exchange factor (GEF) that acts as an activator of Rop (Rho of plants) GTPases by promoting the exchange of GDP for GTP. The chain is Rop guanine nucleotide exchange factor 2 (ROPGEF2) from Arabidopsis thaliana (Mouse-ear cress).